The following is a 260-amino-acid chain: Acetylglutamate kinase (260 aa).

Residues 46-47, arginine 68, and asparagine 160 each bind substrate; that span reads GG.

This sequence belongs to the acetylglutamate kinase family. ArgB subfamily.

It is found in the cytoplasm. The enzyme catalyses N-acetyl-L-glutamate + ATP = N-acetyl-L-glutamyl 5-phosphate + ADP. Its pathway is amino-acid biosynthesis; L-arginine biosynthesis; N(2)-acetyl-L-ornithine from L-glutamate: step 2/4. In terms of biological role, catalyzes the ATP-dependent phosphorylation of N-acetyl-L-glutamate. This is Acetylglutamate kinase from Shewanella sp. (strain W3-18-1).